Reading from the N-terminus, the 124-residue chain is S-adenosylmethionine decarboxylase proenzyme (124 aa).

Ser70 functions as the Schiff-base intermediate with substrate; via pyruvic acid in the catalytic mechanism. Ser70 carries the pyruvic acid (Ser); by autocatalysis modification. The active-site Proton acceptor; for processing activity is His75. The active-site Proton donor; for catalytic activity is the Cys90.

It belongs to the prokaryotic AdoMetDC family. Type 1 subfamily. In terms of assembly, heterotetramer of two alpha and two beta chains arranged as a dimer of alpha/beta heterodimers. Requires pyruvate as cofactor. Is synthesized initially as an inactive proenzyme. Formation of the active enzyme involves a self-maturation process in which the active site pyruvoyl group is generated from an internal serine residue via an autocatalytic post-translational modification. Two non-identical subunits are generated from the proenzyme in this reaction, and the pyruvate is formed at the N-terminus of the alpha chain, which is derived from the carboxyl end of the proenzyme. The post-translation cleavage follows an unusual pathway, termed non-hydrolytic serinolysis, in which the side chain hydroxyl group of the serine supplies its oxygen atom to form the C-terminus of the beta chain, while the remainder of the serine residue undergoes an oxidative deamination to produce ammonia and the pyruvoyl group blocking the N-terminus of the alpha chain.

It carries out the reaction S-adenosyl-L-methionine + H(+) = S-adenosyl 3-(methylsulfanyl)propylamine + CO2. It functions in the pathway amine and polyamine biosynthesis; S-adenosylmethioninamine biosynthesis; S-adenosylmethioninamine from S-adenosyl-L-methionine: step 1/1. Catalyzes the decarboxylation of S-adenosylmethionine to S-adenosylmethioninamine (dcAdoMet), the propylamine donor required for the synthesis of the polyamines spermine and spermidine from the diamine putrescine. The protein is S-adenosylmethionine decarboxylase proenzyme of Pyrobaculum neutrophilum (strain DSM 2338 / JCM 9278 / NBRC 100436 / V24Sta) (Thermoproteus neutrophilus).